The following is a 251-amino-acid chain: Cell division protein ZapD (251 aa).

It belongs to the ZapD family. As to quaternary structure, interacts with FtsZ.

Its subcellular location is the cytoplasm. In terms of biological role, cell division factor that enhances FtsZ-ring assembly. Directly interacts with FtsZ and promotes bundling of FtsZ protofilaments, with a reduction in FtsZ GTPase activity. The chain is Cell division protein ZapD from Burkholderia vietnamiensis (strain G4 / LMG 22486) (Burkholderia cepacia (strain R1808)).